The primary structure comprises 179 residues: Ribosome maturation factor RimM (179 aa).

The PRC barrel domain maps to Lys-95 to Leu-174.

This sequence belongs to the RimM family. As to quaternary structure, binds ribosomal protein uS19.

Its subcellular location is the cytoplasm. An accessory protein needed during the final step in the assembly of 30S ribosomal subunit, possibly for assembly of the head region. Essential for efficient processing of 16S rRNA. May be needed both before and after RbfA during the maturation of 16S rRNA. It has affinity for free ribosomal 30S subunits but not for 70S ribosomes. This Campylobacter jejuni subsp. jejuni serotype O:6 (strain 81116 / NCTC 11828) protein is Ribosome maturation factor RimM.